The sequence spans 88 residues: Small ribosomal subunit protein uS19 (88 aa).

The protein belongs to the universal ribosomal protein uS19 family.

Functionally, protein S19 forms a complex with S13 that binds strongly to the 16S ribosomal RNA. This Mycoplasma mycoides subsp. mycoides SC (strain CCUG 32753 / NCTC 10114 / PG1) protein is Small ribosomal subunit protein uS19.